Reading from the N-terminus, the 374-residue chain is uncharacterized protein (374 aa).

Residue 29-36 (GSLNSGKS) participates in ATP binding.

It belongs to the archaeal ATPase family.

This is an uncharacterized protein from Methanocaldococcus jannaschii (strain ATCC 43067 / DSM 2661 / JAL-1 / JCM 10045 / NBRC 100440) (Methanococcus jannaschii).